We begin with the raw amino-acid sequence, 145 residues long: D-aminoacyl-tRNA deacylase (145 aa).

Residues 137-138 (GP) carry the Gly-cisPro motif, important for rejection of L-amino acids motif.

The protein belongs to the DTD family. In terms of assembly, homodimer.

The protein resides in the cytoplasm. It carries out the reaction glycyl-tRNA(Ala) + H2O = tRNA(Ala) + glycine + H(+). It catalyses the reaction a D-aminoacyl-tRNA + H2O = a tRNA + a D-alpha-amino acid + H(+). Its function is as follows. An aminoacyl-tRNA editing enzyme that deacylates mischarged D-aminoacyl-tRNAs. Also deacylates mischarged glycyl-tRNA(Ala), protecting cells against glycine mischarging by AlaRS. Acts via tRNA-based rather than protein-based catalysis; rejects L-amino acids rather than detecting D-amino acids in the active site. By recycling D-aminoacyl-tRNA to D-amino acids and free tRNA molecules, this enzyme counteracts the toxicity associated with the formation of D-aminoacyl-tRNA entities in vivo and helps enforce protein L-homochirality. This chain is D-aminoacyl-tRNA deacylase, found in Pseudomonas fluorescens (strain ATCC BAA-477 / NRRL B-23932 / Pf-5).